Consider the following 141-residue polypeptide: Regulator of ribonuclease activity B (141 aa).

A disordered region spans residues 112–141 (GTYFEDPNAPDDEDDNDDLFPPEEDEPRLH). Positions 119–141 (NAPDDEDDNDDLFPPEEDEPRLH) are enriched in acidic residues.

This sequence belongs to the RraB family. In terms of assembly, interacts with the C-terminal region of Rne.

It is found in the cytoplasm. Its function is as follows. Globally modulates RNA abundance by binding to RNase E (Rne) and regulating its endonucleolytic activity. Can modulate Rne action in a substrate-dependent manner by altering the composition of the degradosome. The chain is Regulator of ribonuclease activity B from Xenorhabdus nematophila (strain ATCC 19061 / DSM 3370 / CCUG 14189 / LMG 1036 / NCIMB 9965 / AN6).